The primary structure comprises 262 residues: Octopine permease ATP-binding protein P (262 aa).

In terms of domain architecture, ABC transporter spans 9–254 (VQLKDIRKNF…PRTDRFRQFL (246 aa)). An ATP-binding site is contributed by 41–48 (GSSGSGKS).

It belongs to the ABC transporter superfamily.

It localises to the cell inner membrane. In terms of biological role, component of the octopine active transport system probably consisting of four subunits: Q, M, P and T. The sequence is that of Octopine permease ATP-binding protein P (occP) from Rhizobium radiobacter (Agrobacterium tumefaciens).